A 201-amino-acid polypeptide reads, in one-letter code: Probable nicotinate-nucleotide adenylyltransferase (201 aa).

Belongs to the NadD family.

It catalyses the reaction nicotinate beta-D-ribonucleotide + ATP + H(+) = deamido-NAD(+) + diphosphate. Its pathway is cofactor biosynthesis; NAD(+) biosynthesis; deamido-NAD(+) from nicotinate D-ribonucleotide: step 1/1. Catalyzes the reversible adenylation of nicotinate mononucleotide (NaMN) to nicotinic acid adenine dinucleotide (NaAD). This chain is Probable nicotinate-nucleotide adenylyltransferase, found in Clostridium botulinum (strain ATCC 19397 / Type A).